An 85-amino-acid chain; its full sequence is Delta/kappa-theraphotoxin-Pm1a (85 aa).

An N-terminal signal peptide occupies residues 1 to 19 (MKTFVFIVLVALAFVLTAA). Residues 20-43 (KEERANPSELVSALAELVMLDAER) constitute a propeptide that is removed on maturation. Disulfide bonds link Cys50-Cys64, Cys57-Cys69, and Cys63-Cys77.

This sequence belongs to the neurotoxin 10 (Hwtx-1) family. In terms of tissue distribution, expressed by the venom gland.

Its subcellular location is the secreted. Functionally, multimodal toxin that enhances nociceptor excitability mainly by the simultaneous stimulation of repetitive firing (through Nav1.8/SCN10A channel current enhancement) and impairment of repolarization (by inhibiting delayed rectifier current of Kv2.1/KCNB1), with a potential contribution from tetrodotoxin-sensitive voltage-gated sodium channels (Nav) modified excitability. Enhances Nav1.8/SCN10A currents (EC(50)=1.1 uM), modifies the channel gating by a right-shift in steady-state inactivation and delays open-state inactivation. Also decreases Kv2.1/KCNB1 currents (IC(50)=0.43 uM) and causes a depolarizing shift in the voltage dependence of activation without change in steady-state inactivation. In addition, inhibits peak currents of human sodium channels (Nav1.1 to Nav1.7, IC(50)=0.38-2.3 uM) and delays fast inactivation of Nav1.1/SCN1A, Nav1.3/SCN3A, Nav1.6/SCN8A, and Nav1.7/SCN9A. In small dorsal root ganglion neurons, induces hyperexcitability by enhancing tetrodotoxin-resistant sodium currents, impairing repolarization and lowering the threshold of action potential firing, consistent with the severe pain associated with envenomation. In vivo, elicits nocifensive behavior in mice after intraplantar injection. The sequence is that of Delta/kappa-theraphotoxin-Pm1a from Pelinobius muticus (King baboon spider).